The sequence spans 115 residues: Splicing factor 3B subunit 6-like protein (115 aa).

The interval 9–22 is interaction with pre-mRNA branch site; that stretch reads EVNSILFIKNLSFK. The RRM domain occupies 12 to 87; it reads SILFIKNLSF…RYLVVHYYNP (76 aa).

It is found in the nucleus. Necessary for the splicing of pre-mRNA. The sequence is that of Splicing factor 3B subunit 6-like protein from Schizosaccharomyces pombe (strain 972 / ATCC 24843) (Fission yeast).